Reading from the N-terminus, the 184-residue chain is Inosine triphosphate pyrophosphatase (184 aa).

10-15 (TGNVKK) serves as a coordination point for ITP. Glutamate 37 contacts Mg(2+). ITP contacts are provided by residues lysine 49, 65 to 66 (DT), lysine 82, 141 to 144 (FGWD), lysine 164, and 169 to 170 (HR).

The protein belongs to the HAM1 NTPase family. As to quaternary structure, homodimer. Requires Mg(2+) as cofactor. It depends on Mn(2+) as a cofactor.

The protein localises to the cytoplasm. It catalyses the reaction ITP + H2O = IMP + diphosphate + H(+). The catalysed reaction is dITP + H2O = dIMP + diphosphate + H(+). The enzyme catalyses XTP + H2O = XMP + diphosphate + H(+). Functionally, pyrophosphatase that hydrolyzes non-canonical purine nucleotides such as inosine triphosphate (ITP), deoxyinosine triphosphate (dITP) or xanthosine 5'-triphosphate (XTP) to their respective monophosphate derivatives. The enzyme does not distinguish between the deoxy- and ribose forms. Probably excludes non-canonical purines from RNA and DNA precursor pools, thus preventing their incorporation into RNA and DNA and avoiding chromosomal lesions. This is Inosine triphosphate pyrophosphatase from Caenorhabditis elegans.